We begin with the raw amino-acid sequence, 328 residues long: Alpha-tubulin N-acetyltransferase 2 (328 aa).

The N-acetyltransferase domain maps to 5 to 185 (SQVALLPKLS…NNFVVFHRYF (181 aa)). Residues 119 to 132 (FFVD…GFGK) and 155 to 164 (SVKFLAFLRK) contribute to the acetyl-CoA site. Disordered stretches follow at residues 219–261 (EYQS…PGKK) and 282–328 (GGDP…TPEH). Pro residues predominate over residues 238-248 (TPPPPLPPPLV). Positions 312 to 328 (PTRSGVQYNIISGTPEH) are enriched in polar residues.

The protein belongs to the acetyltransferase ATAT1 family.

It carries out the reaction L-lysyl-[alpha-tubulin] + acetyl-CoA = N(6)-acetyl-L-lysyl-[alpha-tubulin] + CoA + H(+). Specifically acetylates 'Lys-40' in alpha-tubulin on the lumenal side of microtubules. Promotes microtubule destabilization and accelerates microtubule dynamics; this activity may be independent of acetylation activity. Acetylates alpha-tubulin with a slow enzymatic rate, due to a catalytic site that is not optimized for acetyl transfer. Enters the microtubule through each end and diffuses quickly throughout the lumen of microtubules. Acetylates only long/old microtubules because of its slow acetylation rate since it does not have time to act on dynamically unstable microtubules before the enzyme is released. This chain is Alpha-tubulin N-acetyltransferase 2, found in Trypanosoma cruzi (strain CL Brener).